Reading from the N-terminus, the 487-residue chain is 2-aminomuconic semialdehyde dehydrogenase (487 aa).

231–236 (GSQPTA) contacts NAD(+). The active-site Proton acceptor is Glu-253. Residue Cys-287 is the Nucleophile of the active site. A Phosphoserine modification is found at Ser-362.

Belongs to the aldehyde dehydrogenase family. As to expression, detected in hepatocytes and in proximal and distal convoluted tubules in kidney cortex (at protein level). Highly expressed in adult liver and in kidney cortex. First detected in embryonic liver after 15 days of development.

It is found in the cytoplasm. The enzyme catalyses 2-aminomuconate 6-semialdehyde + NAD(+) + H2O = (2Z,4E)-2-aminomuconate + NADH + 2 H(+). The protein operates within amino-acid degradation; L-kynurenine degradation. Catalyzes the NAD-dependent oxidation of 2-aminomuconic semialdehyde of the kynurenine metabolic pathway in L-tryptophan degradation. The polypeptide is 2-aminomuconic semialdehyde dehydrogenase (Aldh8a1) (Mus musculus (Mouse)).